The following is an 843-amino-acid chain: Aminopeptidase N (843 aa).

Substrate is bound by residues Glu120 and 252–256 (GAMEN). Residue His288 participates in Zn(2+) binding. The Proton acceptor role is filled by Glu289. Zn(2+)-binding residues include His292 and Glu311.

Belongs to the peptidase M1 family. Monomer. It depends on Zn(2+) as a cofactor.

Its subcellular location is the cytoplasm. The catalysed reaction is Release of an N-terminal amino acid, Xaa-|-Yaa- from a peptide, amide or arylamide. Xaa is preferably Ala, but may be most amino acids including Pro (slow action). When a terminal hydrophobic residue is followed by a prolyl residue, the two may be released as an intact Xaa-Pro dipeptide.. Its function is as follows. Aminopeptidase with broad substrate specificity to several peptides. The polypeptide is Aminopeptidase N (pepN) (Lactobacillus delbrueckii subsp. lactis).